A 356-amino-acid polypeptide reads, in one-letter code: DNA polymerase IV (356 aa).

One can recognise a UmuC domain in the interval 7–188 (IIHIDMDCFY…LPLKKISGVG (182 aa)). Mg(2+) is bound by residues aspartate 11 and aspartate 106. The active site involves glutamate 107.

It belongs to the DNA polymerase type-Y family. As to quaternary structure, monomer. Mg(2+) is required as a cofactor.

It is found in the cytoplasm. It catalyses the reaction DNA(n) + a 2'-deoxyribonucleoside 5'-triphosphate = DNA(n+1) + diphosphate. Poorly processive, error-prone DNA polymerase involved in untargeted mutagenesis. Copies undamaged DNA at stalled replication forks, which arise in vivo from mismatched or misaligned primer ends. These misaligned primers can be extended by PolIV. Exhibits no 3'-5' exonuclease (proofreading) activity. May be involved in translesional synthesis, in conjunction with the beta clamp from PolIII. This chain is DNA polymerase IV, found in Glaesserella parasuis serovar 5 (strain SH0165) (Haemophilus parasuis).